The primary structure comprises 123 residues: Small ribosomal subunit protein uS12 (123 aa).

Asp-89 is subject to 3-methylthioaspartic acid.

Belongs to the universal ribosomal protein uS12 family. As to quaternary structure, part of the 30S ribosomal subunit. Contacts proteins S8 and S17. May interact with IF1 in the 30S initiation complex.

Its function is as follows. With S4 and S5 plays an important role in translational accuracy. In terms of biological role, interacts with and stabilizes bases of the 16S rRNA that are involved in tRNA selection in the A site and with the mRNA backbone. Located at the interface of the 30S and 50S subunits, it traverses the body of the 30S subunit contacting proteins on the other side and probably holding the rRNA structure together. The combined cluster of proteins S8, S12 and S17 appears to hold together the shoulder and platform of the 30S subunit. This Syntrophotalea carbinolica (strain DSM 2380 / NBRC 103641 / GraBd1) (Pelobacter carbinolicus) protein is Small ribosomal subunit protein uS12.